Here is a 211-residue protein sequence, read N- to C-terminus: Urease accessory protein UreG (211 aa).

Residue 12–19 (GPVGAGKT) participates in GTP binding.

This sequence belongs to the SIMIBI class G3E GTPase family. UreG subfamily. In terms of assembly, homodimer. UreD, UreF and UreG form a complex that acts as a GTP-hydrolysis-dependent molecular chaperone, activating the urease apoprotein by helping to assemble the nickel containing metallocenter of UreC. The UreE protein probably delivers the nickel.

It localises to the cytoplasm. Functionally, facilitates the functional incorporation of the urease nickel metallocenter. This process requires GTP hydrolysis, probably effectuated by UreG. This chain is Urease accessory protein UreG, found in Paracoccus denitrificans (strain Pd 1222).